The sequence spans 521 residues: Apolipoprotein N-acyltransferase (521 aa).

5 helical membrane passes run Ile24–Leu44, Trp71–Ile91, Ile128–Leu148, Ile151–Ile171, and Asn182–Ile202. In terms of domain architecture, CN hydrolase spans Leu218 to Leu472. Glu263 (proton acceptor) is an active-site residue. Residue Lys331 is part of the active site. Cys383 acts as the Nucleophile in catalysis.

It belongs to the CN hydrolase family. Apolipoprotein N-acyltransferase subfamily.

The protein resides in the cell inner membrane. The catalysed reaction is N-terminal S-1,2-diacyl-sn-glyceryl-L-cysteinyl-[lipoprotein] + a glycerophospholipid = N-acyl-S-1,2-diacyl-sn-glyceryl-L-cysteinyl-[lipoprotein] + a 2-acyl-sn-glycero-3-phospholipid + H(+). The protein operates within protein modification; lipoprotein biosynthesis (N-acyl transfer). In terms of biological role, catalyzes the phospholipid dependent N-acylation of the N-terminal cysteine of apolipoprotein, the last step in lipoprotein maturation. This chain is Apolipoprotein N-acyltransferase, found in Borreliella burgdorferi (strain ATCC 35210 / DSM 4680 / CIP 102532 / B31) (Borrelia burgdorferi).